The chain runs to 912 residues: DNA ligase 4 (912 aa).

Positions 276, 277, 278, 279, 283, 336, 350, 372, 432, 437, 454, and 456 each coordinate ATP. The active-site N6-AMP-lysine intermediate is Lys278. Residue Glu336 participates in Mg(2+) binding. Glu432 provides a ligand contact to Mg(2+). Residues 615-625 (LASKHLYIDEY) form a required for catalytic activity region. BRCT domains are found at residues 659 to 748 (KVSS…PAFM) and 809 to 912 (CKLC…QFLI).

Belongs to the ATP-dependent DNA ligase family. In terms of assembly, interacts with XRCC4; the LIG4-XRCC4 subcomplex has a 1:2 stoichiometry. Component of the core long-range non-homologous end joining (NHEJ) complex (also named DNA-PK complex) composed of PRKDC, LIG4, XRCC4, XRCC6/Ku70, XRCC5/Ku86 and NHEJ1/XLF. Additional component of the NHEJ complex includes PAXX. Following autophosphorylation, PRKDC dissociates from DNA, leading to formation of the short-range NHEJ complex, composed of LIG4, XRCC4, XRCC6/Ku70, XRCC5/Ku86 and NHEJ1/XLF. Mg(2+) is required as a cofactor.

It localises to the nucleus. The catalysed reaction is ATP + (deoxyribonucleotide)n-3'-hydroxyl + 5'-phospho-(deoxyribonucleotide)m = (deoxyribonucleotide)n+m + AMP + diphosphate.. In terms of biological role, DNA ligase involved in DNA non-homologous end joining (NHEJ); required for double-strand break (DSB) repair and V(D)J recombination. Catalyzes the NHEJ ligation step of the broken DNA during DSB repair by resealing the DNA breaks after the gap filling is completed. Joins single-strand breaks in a double-stranded polydeoxynucleotide in an ATP-dependent reaction. LIG4 is mechanistically flexible: it can ligate nicks as well as compatible DNA overhangs alone, while in the presence of XRCC4, it can ligate ends with 2-nucleotides (nt) microhomology and 1-nt gaps. Forms a subcomplex with XRCC4; the LIG4-XRCC4 subcomplex is responsible for the NHEJ ligation step and XRCC4 enhances the joining activity of LIG4. In Gallus gallus (Chicken), this protein is DNA ligase 4.